Here is a 329-residue protein sequence, read N- to C-terminus: uncharacterized protein (329 aa).

10 helical membrane-spanning segments follow: residues 9–29, 53–73, 105–125, 126–146, 154–174, 179–199, 210–230, 240–260, 273–293, and 296–316; these read LMGL…NVIV, SHSF…MALI, FLMF…PTGI, AITL…RLFN, WLVI…AYGG, LVLG…YTVF, VPFT…CLII, WLAI…GHVL, AAII…LAIQ, and LTNI…LLNY. EamA domains are found at residues 103–169 and 191–316; these read CGFL…LTIP and IVYA…LLNY.

It belongs to the EamA transporter family.

It is found in the cell membrane. This is an uncharacterized protein from Synechocystis sp. (strain ATCC 27184 / PCC 6803 / Kazusa).